The primary structure comprises 239 residues: tRNA1(Val) (adenine(37)-N6)-methyltransferase (239 aa).

It belongs to the methyltransferase superfamily. tRNA (adenine-N(6)-)-methyltransferase family.

The protein localises to the cytoplasm. The catalysed reaction is adenosine(37) in tRNA1(Val) + S-adenosyl-L-methionine = N(6)-methyladenosine(37) in tRNA1(Val) + S-adenosyl-L-homocysteine + H(+). In terms of biological role, specifically methylates the adenine in position 37 of tRNA(1)(Val) (anticodon cmo5UAC). The protein is tRNA1(Val) (adenine(37)-N6)-methyltransferase of Vibrio vulnificus (strain CMCP6).